Reading from the N-terminus, the 257-residue chain is Small ribosomal subunit protein uS3 (257 aa).

In terms of domain architecture, KH type-2 spans 40–110 (IRKYLSTKYK…LVSLKVVEVQ (71 aa)). Residues 223–257 (ANKEFSRSSKPKKGSFNRSSRSKNTKPAPKQAVSE) form a disordered region. The span at 231–246 (SKPKKGSFNRSSRSKN) shows a compositional bias: basic residues.

It belongs to the universal ribosomal protein uS3 family. Part of the 30S ribosomal subunit. Forms a tight complex with proteins S10 and S14.

Its function is as follows. Binds the lower part of the 30S subunit head. Binds mRNA in the 70S ribosome, positioning it for translation. The polypeptide is Small ribosomal subunit protein uS3 (Ureaplasma parvum serovar 3 (strain ATCC 27815 / 27 / NCTC 11736)).